A 333-amino-acid chain; its full sequence is NADH-quinone oxidoreductase subunit H (333 aa).

8 consecutive transmembrane segments (helical) span residues 15–35 (IALF…FVTY), 88–108 (YVLA…VLPF), 117–137 (IGVG…GVVA), 165–185 (LVMS…VDIV), 191–211 (VWFI…AVAE), 241–261 (FFML…TILF), 274–294 (IPGA…LIWF), and 313–333 (VLLP…AWFF).

It belongs to the complex I subunit 1 family. NDH-1 is composed of 14 different subunits. Subunits NuoA, H, J, K, L, M, N constitute the membrane sector of the complex.

The protein resides in the cell membrane. It carries out the reaction a quinone + NADH + 5 H(+)(in) = a quinol + NAD(+) + 4 H(+)(out). In terms of biological role, NDH-1 shuttles electrons from NADH, via FMN and iron-sulfur (Fe-S) centers, to quinones in the respiratory chain. The immediate electron acceptor for the enzyme in this species is believed to be ubiquinone. Couples the redox reaction to proton translocation (for every two electrons transferred, four hydrogen ions are translocated across the cytoplasmic membrane), and thus conserves the redox energy in a proton gradient. This subunit may bind ubiquinone. The polypeptide is NADH-quinone oxidoreductase subunit H (Geobacillus kaustophilus (strain HTA426)).